Here is a 441-residue protein sequence, read N- to C-terminus: Deoxyguanosinetriphosphate triphosphohydrolase-like protein (441 aa).

Residues 62 to 255 enclose the HD domain; the sequence is RLTHSLEAAQ…MELADDIAYG (194 aa).

Belongs to the dGTPase family. Type 2 subfamily.

This is Deoxyguanosinetriphosphate triphosphohydrolase-like protein (dgt) from Vibrio cholerae serotype O1 (strain ATCC 39541 / Classical Ogawa 395 / O395).